Here is a 356-residue protein sequence, read N- to C-terminus: D-alanine--D-alanine ligase (356 aa).

Residues 146-350 form the ATP-grasp domain; the sequence is KKLLVAEGLP…YAELLDTLIQ (205 aa). ATP is bound at residue 173–228; that stretch reads KERLGLPVFVKPARGGSSIGVSKVSAWEDLEAALTLAYESDDKVLIEPEISGAEVE. Positions 305, 317, and 319 each coordinate Mg(2+).

This sequence belongs to the D-alanine--D-alanine ligase family. The cofactor is Mg(2+). Mn(2+) serves as cofactor.

The protein resides in the cytoplasm. It catalyses the reaction 2 D-alanine + ATP = D-alanyl-D-alanine + ADP + phosphate + H(+). Its pathway is cell wall biogenesis; peptidoglycan biosynthesis. Cell wall formation. The protein is D-alanine--D-alanine ligase of Corynebacterium aurimucosum (strain ATCC 700975 / DSM 44827 / CIP 107346 / CN-1) (Corynebacterium nigricans).